The sequence spans 546 residues: MDPKAGGGGEEDDCVDSGAETGGSDYSHLSSTSSELSVEEAQDPFLVSIHIIADPGESQPLQEAIDNVLAWIHPDLPLFRVSERRACRRRRKPPKGAQPALAVVLFLQEEYGEEQILQLHRTLQQPPWRHHHTEQVHGRFLPYLPCSQDFFTLAPGTPLWAIRPVHYGKEIVRFTVYCRHDNYADSLRFYQLILRRSPSQKKADFCIFPIFSNLDVDIQFSLKRLPCDQCPVPTDSSVLEFRVRDIGELVPLLPNPCSPISEGRWQTEDHDGNKILLQAQRVHKKFPKPGRVHHSSEKKRHSTPLPSTAVPSHTPGSSQQSPLNSPHPGPIRTGLPPGHQQEFAGRANSTPNPPWSFQRSKSLFCLPTGGPSLASSAEPQWFSNTGAPGHRASEWRHGHLLSIDDLEGAQETDVDTGLRLSSSDLSVVSAYSAPSRFCSTVETPLPSERCSSHWAAHKDSREGPLPTVSKVTTEASWASLPFFTKRSSSSSATARAAPPAPSTSTLTDSSPQLPCDSPKVKQTDGDMPPPPGSAGPGDNDMEEFYI.

3 disordered regions span residues 1 to 37, 285 to 361, and 488 to 546; these read MDPKAGGGGEEDDCVDSGAETGGSDYSHLSSTSSELS, KFPK…QRSK, and SSSS…EFYI. The span at 24–36 shows a compositional bias: low complexity; the sequence is SDYSHLSSTSSEL. Positions 285 to 302 are enriched in basic residues; that stretch reads KFPKPGRVHHSSEKKRHS. 2 stretches are compositionally biased toward polar residues: residues 304–324 and 347–361; these read PLPSTAVPSHTPGSSQQSPLN and ANSTPNPPWSFQRSK. A compositionally biased stretch (low complexity) spans 488-511; sequence SSSSATARAAPPAPSTSTLTDSSP.

The protein belongs to the FAM124 family.

The sequence is that of Protein FAM124A (FAM124A) from Pongo abelii (Sumatran orangutan).